A 141-amino-acid polypeptide reads, in one-letter code: NADPH-dependent 7-cyano-7-deazaguanine reductase (141 aa).

Cys56 acts as the Thioimide intermediate in catalysis. Asp63 serves as the catalytic Proton donor. Substrate is bound by residues 78 to 80 and 97 to 98; these read VEL and HE.

The protein belongs to the GTP cyclohydrolase I family. QueF type 1 subfamily.

It is found in the cytoplasm. The enzyme catalyses 7-aminomethyl-7-carbaguanine + 2 NADP(+) = 7-cyano-7-deazaguanine + 2 NADPH + 3 H(+). It functions in the pathway tRNA modification; tRNA-queuosine biosynthesis. Functionally, catalyzes the NADPH-dependent reduction of 7-cyano-7-deazaguanine (preQ0) to 7-aminomethyl-7-deazaguanine (preQ1). The sequence is that of NADPH-dependent 7-cyano-7-deazaguanine reductase from Trichodesmium erythraeum (strain IMS101).